A 451-amino-acid chain; its full sequence is Probable phosphoglucosamine mutase (451 aa).

Catalysis depends on Ser-96, which acts as the Phosphoserine intermediate. The Mg(2+) site is built by Ser-96, Asp-233, Asp-235, and Asp-237. Ser-96 carries the post-translational modification Phosphoserine.

This sequence belongs to the phosphohexose mutase family. Requires Mg(2+) as cofactor. Post-translationally, activated by phosphorylation.

It catalyses the reaction alpha-D-glucosamine 1-phosphate = D-glucosamine 6-phosphate. In terms of biological role, catalyzes the conversion of glucosamine-6-phosphate to glucosamine-1-phosphate. The protein is Probable phosphoglucosamine mutase of Pyrococcus horikoshii (strain ATCC 700860 / DSM 12428 / JCM 9974 / NBRC 100139 / OT-3).